The primary structure comprises 126 residues: Holo-[acyl-carrier-protein] synthase (126 aa).

Residues aspartate 9 and glutamate 58 each coordinate Mg(2+).

The protein belongs to the P-Pant transferase superfamily. AcpS family. Mg(2+) is required as a cofactor.

The protein resides in the cytoplasm. It catalyses the reaction apo-[ACP] + CoA = holo-[ACP] + adenosine 3',5'-bisphosphate + H(+). Functionally, transfers the 4'-phosphopantetheine moiety from coenzyme A to a Ser of acyl-carrier-protein. The protein is Holo-[acyl-carrier-protein] synthase of Photorhabdus laumondii subsp. laumondii (strain DSM 15139 / CIP 105565 / TT01) (Photorhabdus luminescens subsp. laumondii).